Consider the following 307-residue polypeptide: Nucleotide-binding protein Achl_1824 (307 aa).

ATP is bound at residue 30-37 (GMSGAGRS). 81-84 (DVRS) contributes to the GTP binding site.

It belongs to the RapZ-like family.

In terms of biological role, displays ATPase and GTPase activities. This chain is Nucleotide-binding protein Achl_1824, found in Pseudarthrobacter chlorophenolicus (strain ATCC 700700 / DSM 12829 / CIP 107037 / JCM 12360 / KCTC 9906 / NCIMB 13794 / A6) (Arthrobacter chlorophenolicus).